The sequence spans 610 residues: Menin (610 aa).

Residues 214–390 (GVAERSWLYL…SLLEAGEERP (177 aa)) are interaction with FANCD2. Disordered stretches follow at residues 385–404 (AGEERPGEQTQGTQSQGSAL) and 460–552 (REAE…PVLT). A compositionally biased stretch (low complexity) spans 393-402 (QTQGTQSQGS). The segment covering 484 to 500 (RRESKPEEPPPPKKPAL) has biased composition (basic and acidic residues). At Ser-487 the chain carries Phosphoserine. Pro residues-rich tracts occupy residues 512 to 521 (PGPPRKPPGT) and 537 to 548 (VPAPAASPPPEG). Position 543 is a phosphoserine (Ser-543). Thr-594 is subject to Phosphothreonine.

In terms of assembly, component of the MLL-HCF complex, at least composed of KMT2A/MLL1, MEN1, ASH2L, RBBP5, DPY30, WDR5, HCFC1 and HCFC2. Component of the menin-associated histone methyltransferase complex, at least composed of KMT2B/MLL4, MEN1, ASH2L, RBBP5, DPY30 and WDR5. Interacts with POLR2B. Interacts with POLR2A phosphorylated at 'Ser-5', but not with the unphosphorylated, nor 'Ser-2' phosphorylated POLR2A forms. Interacts with FANCD2 and DBF4. Interacts with SMAD3, but not with SMAD2, nor SMAD4. Directly interacts with NFKB1, NFKB2 and RELA. Interacts with JUND (via MBM motif); inhibits the interaction of JUND with MAPK10 and the phosphorylation of JUND by MAP kinases MAPK8 and MAPK10. Interacts with KMT2A (via MBM motif). The KMT2A-MEN1 complex interacts with PSIP1 with a greater affinity as MEN1 enhances interaction of KMT2A with PSIP1.

It is found in the nucleus. Essential component of a MLL/SET1 histone methyltransferase (HMT) complex, a complex that specifically methylates 'Lys-4' of histone H3 (H3K4). Functions as a transcriptional regulator. Binds to the TERT promoter and represses telomerase expression. Plays a role in TGFB1-mediated inhibition of cell-proliferation, possibly regulating SMAD3 transcriptional activity. Represses JUND-mediated transcriptional activation on AP1 sites, as well as that mediated by NFKB subunit RELA. Positively regulates HOXC8 and HOXC6 gene expression. May be involved in normal hematopoiesis through the activation of HOXA9 expression. May be involved in DNA repair. This Bos taurus (Bovine) protein is Menin (MEN1).